Here is a 569-residue protein sequence, read N- to C-terminus: Archaeosine synthase (569 aa).

One can recognise a PUA domain in the interval 495–569; sequence SGGKDINYIE…ALVNIRNVKS (75 aa).

Belongs to the archaeosine synthase type 1 family. In terms of assembly, homodimer.

The catalysed reaction is 7-cyano-7-carbaguanosine(15) in tRNA + L-glutamine + H2O = archaeosine(15) in tRNA + L-glutamate. The protein operates within tRNA modification; archaeosine-tRNA biosynthesis. Its function is as follows. Is responsible for the final step in the biosynthesis of archaeosine, a modified nucleoside present in the dihydrouridine loop (D-loop) of archaeal tRNA. Catalyzes the conversion of 7-cyano-7-deazaguanine (preQ0)-modified tRNA to archaeosine-tRNA, transforming a nitrile group to a formamidine group. Can use either glutamine, asparagine or ammonium as amino donor. The sequence is that of Archaeosine synthase from Methanocaldococcus jannaschii (strain ATCC 43067 / DSM 2661 / JAL-1 / JCM 10045 / NBRC 100440) (Methanococcus jannaschii).